Reading from the N-terminus, the 340-residue chain is Uroporphyrinogen decarboxylase (340 aa).

Residues 21-25, aspartate 71, tyrosine 147, serine 202, and histidine 316 contribute to the substrate site; that span reads RQAGR.

Belongs to the uroporphyrinogen decarboxylase family. Homodimer.

The protein resides in the cytoplasm. The catalysed reaction is uroporphyrinogen III + 4 H(+) = coproporphyrinogen III + 4 CO2. It functions in the pathway porphyrin-containing compound metabolism; protoporphyrin-IX biosynthesis; coproporphyrinogen-III from 5-aminolevulinate: step 4/4. Its function is as follows. Catalyzes the decarboxylation of four acetate groups of uroporphyrinogen-III to yield coproporphyrinogen-III. This chain is Uroporphyrinogen decarboxylase, found in Nitratiruptor sp. (strain SB155-2).